Reading from the N-terminus, the 159-residue chain is Major allergen Mal d 1 (159 aa).

The protein belongs to the BetVI family.

The sequence is that of Major allergen Mal d 1 from Malus domestica (Apple).